A 166-amino-acid chain; its full sequence is UPF0260 protein GbCGDNIH1_2046 (166 aa).

Residues 147-166 (RFPRPRRPRQEPAGKTADES) form a disordered region. The span at 154-166 (PRQEPAGKTADES) shows a compositional bias: basic and acidic residues.

Belongs to the UPF0260 family.

In Granulibacter bethesdensis (strain ATCC BAA-1260 / CGDNIH1), this protein is UPF0260 protein GbCGDNIH1_2046.